Here is a 192-residue protein sequence, read N- to C-terminus: NADH-quinone oxidoreductase subunit B (192 aa).

C71, C72, C136, and C166 together coordinate [4Fe-4S] cluster.

It belongs to the complex I 20 kDa subunit family. As to quaternary structure, NDH-1 is composed of 14 different subunits. Subunits NuoB, C, D, E, F, and G constitute the peripheral sector of the complex. It depends on [4Fe-4S] cluster as a cofactor.

Its subcellular location is the cell inner membrane. The enzyme catalyses a quinone + NADH + 5 H(+)(in) = a quinol + NAD(+) + 4 H(+)(out). Functionally, NDH-1 shuttles electrons from NADH, via FMN and iron-sulfur (Fe-S) centers, to quinones in the respiratory chain. The immediate electron acceptor for the enzyme in this species is believed to be ubiquinone. Couples the redox reaction to proton translocation (for every two electrons transferred, four hydrogen ions are translocated across the cytoplasmic membrane), and thus conserves the redox energy in a proton gradient. This chain is NADH-quinone oxidoreductase subunit B, found in Sinorhizobium medicae (strain WSM419) (Ensifer medicae).